A 348-amino-acid chain; its full sequence is Phenylalanine--tRNA ligase alpha subunit (348 aa).

Glu-269 lines the Mg(2+) pocket.

Belongs to the class-II aminoacyl-tRNA synthetase family. Phe-tRNA synthetase alpha subunit type 1 subfamily. In terms of assembly, tetramer of two alpha and two beta subunits. Requires Mg(2+) as cofactor.

It localises to the cytoplasm. The enzyme catalyses tRNA(Phe) + L-phenylalanine + ATP = L-phenylalanyl-tRNA(Phe) + AMP + diphosphate + H(+). The sequence is that of Phenylalanine--tRNA ligase alpha subunit from Dechloromonas aromatica (strain RCB).